The primary structure comprises 339 residues: 2-oxoisovalerate dehydrogenase subunit beta (339 aa).

In terms of assembly, heterodimer of an alpha and a beta chain. The cofactor is thiamine diphosphate.

It catalyses the reaction N(6)-[(R)-lipoyl]-L-lysyl-[protein] + 3-methyl-2-oxobutanoate + H(+) = N(6)-[(R)-S(8)-2-methylpropanoyldihydrolipoyl]-L-lysyl-[protein] + CO2. Functionally, the branched-chain alpha-keto dehydrogenase complex catalyzes the overall conversion of alpha-keto acids to acyl-CoA and CO(2). It contains multiple copies of three enzymatic components: branched-chain alpha-keto acid decarboxylase (E1), lipoamide acyltransferase (E2) and lipoamide dehydrogenase (E3). This chain is 2-oxoisovalerate dehydrogenase subunit beta (bkdA2), found in Pseudomonas putida (Arthrobacter siderocapsulatus).